Reading from the N-terminus, the 294-residue chain is Cytidine deaminase (294 aa).

CMP/dCMP-type deaminase domains are found at residues 48-168 (DEDA…FGPK) and 186-294 (LTGD…TLLA). 89–91 (NME) contacts substrate. His-102 provides a ligand contact to Zn(2+). Glu-104 serves as the catalytic Proton donor. Zn(2+)-binding residues include Cys-129 and Cys-132.

This sequence belongs to the cytidine and deoxycytidylate deaminase family. Homodimer. Zn(2+) serves as cofactor.

It catalyses the reaction cytidine + H2O + H(+) = uridine + NH4(+). It carries out the reaction 2'-deoxycytidine + H2O + H(+) = 2'-deoxyuridine + NH4(+). Its function is as follows. This enzyme scavenges exogenous and endogenous cytidine and 2'-deoxycytidine for UMP synthesis. The sequence is that of Cytidine deaminase from Enterobacter sp. (strain 638).